The primary structure comprises 214 residues: MTTLADLRTNYSRASLDAADVNPNPFVQFDVWFKEALSAQLPEPNTMTLATVDEAGRPSARIVLIKGVDERGFVFFTNYESRKGRELAHNPNAALLFYWIELERQVRIEGRIEKTTEEESDRYFASRPLGSRIGAWASEQSAVIESRALLEAREKEISARFGENPPRPPHWGGYRLVPSTIEFWQGRPSRLHDRLLYTRDAASASGWRIARLAP.

Residues 8 to 11 (RTNY) and lysine 66 each bind substrate. FMN-binding positions include 61–66 (RIVLIK), 76–77 (FT), arginine 82, lysine 83, and glutamine 105. Positions 123, 127, and 131 each coordinate substrate. Residues 140–141 (QS) and tryptophan 184 contribute to the FMN site. Residue 190-192 (RLH) coordinates substrate. Arginine 194 lines the FMN pocket.

The protein belongs to the pyridoxamine 5'-phosphate oxidase family. As to quaternary structure, homodimer. The cofactor is FMN.

It catalyses the reaction pyridoxamine 5'-phosphate + O2 + H2O = pyridoxal 5'-phosphate + H2O2 + NH4(+). The catalysed reaction is pyridoxine 5'-phosphate + O2 = pyridoxal 5'-phosphate + H2O2. The protein operates within cofactor metabolism; pyridoxal 5'-phosphate salvage; pyridoxal 5'-phosphate from pyridoxamine 5'-phosphate: step 1/1. It participates in cofactor metabolism; pyridoxal 5'-phosphate salvage; pyridoxal 5'-phosphate from pyridoxine 5'-phosphate: step 1/1. Functionally, catalyzes the oxidation of either pyridoxine 5'-phosphate (PNP) or pyridoxamine 5'-phosphate (PMP) into pyridoxal 5'-phosphate (PLP). This chain is Pyridoxine/pyridoxamine 5'-phosphate oxidase, found in Burkholderia thailandensis (strain ATCC 700388 / DSM 13276 / CCUG 48851 / CIP 106301 / E264).